The chain runs to 523 residues: Transmembrane protein 266 (523 aa).

The Cytoplasmic segment spans residues 1–94 (MTNPQPAIEG…VFLLSASLNS (94 aa)). A helical transmembrane segment spans residues 95–115 (FLVACVILVVILLTLELLIDI). The Extracellular portion of the chain corresponds to 116–121 (KLLQFS). A helical membrane pass occupies residues 122–142 (SAFQFAGVIHWISLVILSVFF). Topologically, residues 143–161 (SETVLRIVVLGIWDYIENK) are cytoplasmic. A helical transmembrane segment spans residues 162–182 (IEVFDGAVIILSLAPMVASTV). At 183-191 (ANGPRSPWD) the chain is on the extracellular side. The chain crosses the membrane as a helical span at residues 192 to 212 (AISLIIMLRIWRVKRVIDAYV). The Cytoplasmic segment spans residues 213–523 (LPVKLEMEMV…EQKLHRVPEA (311 aa)). Residues 218-270 (EMEMVIQQYEKAKVIQDEQLERLTQICQEQGFEIRQLRAHLAQQDLDLAAERE) are a coiled coil. The segment at 380-477 (SASRSSVTRA…PELEHRVSLF (98 aa)) is disordered. The span at 382–397 (SRSSVTRAQSDSSQTL) shows a compositional bias: low complexity. Polar residues predominate over residues 398–411 (GSSMDCSTAREEPS). The segment covering 421 to 430 (LPSQQQVEEA) has biased composition (pro residues).

Homodimer; disulfide-linked. In terms of tissue distribution, mainly expressed in the cerebellum. Also expressed in cerebral cortex, skeletal muscle and thyroid, but at much lower levels.

It localises to the cell membrane. The protein localises to the cell projection. The protein resides in the dendrite. It is found in the perikaryon. Voltage-sensor protein present on the post-synaptic side of glutamatergic mossy fibers and granule cells in the cerebellum. Despite the presence of a voltage-sensor segment, does not form a functional ion channel and its precise role remains unclear. Undergoes both rapid and slow structural rearrangements in response to changes in voltage. Contains a zinc-binding site that can regulate the slow conformational transition. The chain is Transmembrane protein 266 from Homo sapiens (Human).